Here is a 110-residue protein sequence, read N- to C-terminus: MNNAAKRADCWFGAKNYGRAVYECLRGGLYFTKDDENVNSQPFMRWRDRFLFCAEAVYKAQAETGGIKGHYLNATAGTCEEMIKRAVFARELGVPIVMHDYLNRGIHRKY.

It belongs to the RuBisCO large chain family.

The protein localises to the mitochondrion. This is an uncharacterized protein from Arabidopsis thaliana (Mouse-ear cress).